Reading from the N-terminus, the 204-residue chain is Guanylate kinase (204 aa).

The region spanning 4 to 182 (GMLVVVSGPS…AVNDLEAVLT (179 aa)) is the Guanylate kinase-like domain. ATP is bound at residue 11–18 (GPSGAGKG).

It belongs to the guanylate kinase family.

It is found in the cytoplasm. It carries out the reaction GMP + ATP = GDP + ADP. In terms of biological role, essential for recycling GMP and indirectly, cGMP. This Carboxydothermus hydrogenoformans (strain ATCC BAA-161 / DSM 6008 / Z-2901) protein is Guanylate kinase.